The primary structure comprises 236 residues: 3-deoxy-D-manno-octulosonic acid kinase (236 aa).

Residue D167 is part of the active site.

The protein belongs to the protein kinase superfamily. KdkA/RfaP family.

The protein localises to the cell inner membrane. The enzyme catalyses an alpha-Kdo-(2-&gt;6)-lipid IVA + ATP = a 4-O-phospho-alpha-Kdo-(2-&gt;6)-lipid IVA + ADP + H(+). It participates in bacterial outer membrane biogenesis; LPS core biosynthesis. Catalyzes the ATP-dependent phosphorylation of the 3-deoxy-D-manno-octulosonic acid (Kdo) residue in Kdo-lipid IV(A) at the 4-OH position. The polypeptide is 3-deoxy-D-manno-octulosonic acid kinase (Vibrio vulnificus (strain YJ016)).